The following is a 357-amino-acid chain: Popeye domain-containing protein 1 (357 aa).

The Extracellular segment spans residues 1–38 (MDTTAISPLTPLGVIPDLKNATSVPFNETACENWKEIH). 2 N-linked (GlcNAc...) asparagine glycosylation sites follow: N20 and N27. A helical membrane pass occupies residues 39 to 59 (HLVFHVANICFAAGLVIPTTL). At 60-62 (NLH) the chain is on the cytoplasmic side. Residues 63–83 (MIFLRGLLTVGCALFIIWATL) traverse the membrane as a helical segment. Over 84–89 (YRCALD) the chain is Extracellular. The helical transmembrane segment at 90–110 (IMIWNSVFLVVNLLHFIYLVY) threads the bilayer. The Cytoplasmic portion of the chain corresponds to 111 to 357 (KRRPIKIEKE…AEKLELQRLP (247 aa)). Residues 309 to 323 (GTSSSSSLRPGRTSP) are compositionally biased toward low complexity. The interval 309–357 (GTSSSSSLRPGRTSPYLRTSAKMKPIEESVEDDVFEAPSAEKLELQRLP) is disordered. The span at 347–357 (SAEKLELQRLP) shows a compositional bias: basic and acidic residues.

This sequence belongs to the popeye family. In terms of assembly, homodimer. Homodimerization requires the C-terminus cytoplasmic region. Expressed in the heart and skeletal muscle (at protein level). Isoform 1 and isoform 4: expressed in heart, muscle, brain, stomach, kidney, lung and spleen.

It is found in the lateral cell membrane. Its subcellular location is the cell junction. The protein localises to the tight junction. The protein resides in the membrane. It localises to the cell membrane. It is found in the sarcolemma. Its subcellular location is the caveola. Functionally, cell adhesion molecule involved in the establishment and/or maintenance of cell integrity. Involved in the formation and regulation of the tight junction (TJ) paracellular permeability barrier in epithelial cells. Induces primordial adhesive contact and aggregation of epithelial cells in a Ca(2+)-independent manner. Involved in epithelial movement during corneal sheet formation and regeneration. May play a role in VAMP3-mediated vesicular transport and recycling of receptor molecules. May play a role in the regulation of cell shape and movement by modulating the Rho-GTPase activity. May be involved in skeletal muscle and heart development as well as in the maintenance of heart function. May also be involved in striated muscle regeneration and in the regulation of cell spreading. The sequence is that of Popeye domain-containing protein 1 (POPDC1) from Gallus gallus (Chicken).